The following is a 1440-amino-acid chain: Gag-Pol polyprotein (1440 aa).

The N-myristoyl glycine; by host moiety is linked to residue G2. Residues 7-31 are interaction with Gp41; that stretch reads VLSGGKLDAWEKIRLRPGGKKKYRL. Residues 8–43 form an interaction with host CALM1 region; the sequence is LSGGKLDAWEKIRLRPGGKKKYRLKHLVWASRELER. The tract at residues 12 to 19 is interaction with host AP3D1; the sequence is KLDAWEKI. Positions 14-33 are interaction with membrane phosphatidylinositol 4,5-bisphosphate and RNA; it reads DAWEKIRLRPGGKKKYRLKH. Residues 16 to 22 carry the Nuclear export signal motif; that stretch reads WEKIRLR. Positions 26 to 32 match the Nuclear localization signal motif; sequence KKKYRLK. The segment at 73–77 is interaction with membrane phosphatidylinositol 4,5-bisphosphate; it reads EEIKS. Y138 carries the post-translational modification Phosphotyrosine; by host. Positions 195 to 233 are interaction with human PPIA/CYPA and NUP153; the sequence is NIVGGHQAAMQMLKDTINEEAADWDRVHPVHAGPIPPGQ. The interval 283-369 is dimerization/Multimerization of capsid protein p24; it reads YSPVSILDIR…GGPSHKARVL (87 aa). 2 CCHC-type zinc fingers span residues 396-413 and 417-434; these read IKCF…NCRA and KGCW…DCTE. The dimerization of protease stretch occupies residues 494–498; it reads PQITL. In terms of domain architecture, Peptidase A2 spans 513 to 582; sequence KEALLDTGAD…TPVNIIGRNM (70 aa). The For protease activity; shared with dimeric partner role is filled by D518. Dimerization of protease regions lie at residues 542 to 548 and 581 to 593; these read GIGGFIK and NMLT…LNFP. Residues 636-826 enclose the Reverse transcriptase domain; it reads EGKILKIGPE…PPFLWMGYEL (191 aa). Residues D702, D777, and D778 each contribute to the Mg(2+) site. The RT 'primer grip' stretch occupies residues 819-827; sequence FLWMGYELH. A Tryptophan repeat motif motif is present at residues 990-1006; sequence WEAWWTEYWQATWIPEW. The 124-residue stretch at 1026–1149 folds into the RNase H type-1 domain; sequence IVGAETFYVD…VDKLVSSGIR (124 aa). D1035, E1070, D1090, and D1141 together coordinate Mg(2+). Residues 1155-1196 form an Integrase-type zinc finger; that stretch reads DGIDKAQEEHEKYHSNWRAMASDFNLPPIVAKEIVASCDKCQ. Zn(2+) contacts are provided by H1164, H1168, C1192, and C1195. The Integrase catalytic domain occupies 1206–1356; that stretch reads VDCSPGIWQL…SAGERIIDMI (151 aa). Residues D1216, D1268, and E1304 each contribute to the Mg(2+) site. Positions 1375–1422 form a DNA-binding region, integrase-type; that stretch reads FRVYYRDNRDPIWKGPAKLLWKGEGAVVIQDNSDIKVVPRRKAKIIRD.

As to quaternary structure, homotrimer; further assembles as hexamers of trimers. Interacts with gp41 (via C-terminus). Interacts with host CALM1; this interaction induces a conformational change in the Matrix protein, triggering exposure of the myristate group. Interacts with host AP3D1; this interaction allows the polyprotein trafficking to multivesicular bodies during virus assembly. Part of the pre-integration complex (PIC) which is composed of viral genome, matrix protein, Vpr and integrase. Homodimer; the homodimer further multimerizes as homohexamers or homopentamers. Interacts with human PPIA/CYPA; This interaction stabilizes the capsid. Interacts with human NUP153. Interacts with host PDZD8; this interaction stabilizes the capsid. Interacts with monkey TRIM5; this interaction destabilizes the capsid. In terms of assembly, homodimer, whose active site consists of two apposed aspartic acid residues. As to quaternary structure, heterodimer of p66 RT and p51 RT (RT p66/p51). Heterodimerization of RT is essential for DNA polymerase activity. The overall folding of the subdomains is similar in p66 RT and p51 RT but the spatial arrangements of the subdomains are dramatically different. Homotetramer; may further associate as a homohexadecamer. Part of the pre-integration complex (PIC) which is composed of viral genome, matrix protein, Vpr and integrase. Interacts with human SMARCB1/INI1 and human PSIP1/LEDGF isoform 1. Interacts with human KPNA3; this interaction might play a role in nuclear import of the pre-integration complex. Interacts with human NUP153; this interaction might play a role in nuclear import of the pre-integration complex. Requires Mg(2+) as cofactor. Specific enzymatic cleavages by the viral protease yield mature proteins. The protease is released by autocatalytic cleavage. The polyprotein is cleaved during and after budding, this process is termed maturation. Proteolytic cleavage of p66 RT removes the RNase H domain to yield the p51 RT subunit. Nucleocapsid protein p7 might be further cleaved after virus entry. Post-translationally, tyrosine phosphorylated presumably in the virion by a host kinase. Phosphorylation is apparently not a major regulator of membrane association. In terms of processing, phosphorylated possibly by host MAPK1; this phosphorylation is necessary for Pin1-mediated virion uncoating. Methylated by host PRMT6, impairing its function by reducing RNA annealing and the initiation of reverse transcription.

The protein resides in the host cell membrane. Its subcellular location is the host endosome. The protein localises to the host multivesicular body. It localises to the virion membrane. It is found in the host nucleus. The protein resides in the host cytoplasm. Its subcellular location is the virion. The enzyme catalyses Specific for a P1 residue that is hydrophobic, and P1' variable, but often Pro.. The catalysed reaction is Endohydrolysis of RNA in RNA/DNA hybrids. Three different cleavage modes: 1. sequence-specific internal cleavage of RNA. Human immunodeficiency virus type 1 and Moloney murine leukemia virus enzymes prefer to cleave the RNA strand one nucleotide away from the RNA-DNA junction. 2. RNA 5'-end directed cleavage 13-19 nucleotides from the RNA end. 3. DNA 3'-end directed cleavage 15-20 nucleotides away from the primer terminus.. It carries out the reaction 3'-end directed exonucleolytic cleavage of viral RNA-DNA hybrid.. It catalyses the reaction DNA(n) + a 2'-deoxyribonucleoside 5'-triphosphate = DNA(n+1) + diphosphate. Protease: The viral protease is inhibited by many synthetic protease inhibitors (PIs), such as amprenavir, atazanavir, indinavir, loprinavir, nelfinavir, ritonavir and saquinavir. Use of protease inhibitors in tritherapy regimens permit more ambitious therapeutic strategies. Reverse transcriptase/ribonuclease H: RT can be inhibited either by nucleoside RT inhibitors (NRTIs) or by non nucleoside RT inhibitors (NNRTIs). NRTIs act as chain terminators, whereas NNRTIs inhibit DNA polymerization by binding a small hydrophobic pocket near the RT active site and inducing an allosteric change in this region. Classical NRTIs are abacavir, adefovir (PMEA), didanosine (ddI), lamivudine (3TC), stavudine (d4T), tenofovir (PMPA), zalcitabine (ddC), and zidovudine (AZT). Classical NNRTIs are atevirdine (BHAP U-87201E), delavirdine, efavirenz (DMP-266), emivirine (I-EBU), and nevirapine (BI-RG-587). The tritherapies used as a basic effective treatment of AIDS associate two NRTIs and one NNRTI. Mediates, with Gag polyprotein, the essential events in virion assembly, including binding the plasma membrane, making the protein-protein interactions necessary to create spherical particles, recruiting the viral Env proteins, and packaging the genomic RNA via direct interactions with the RNA packaging sequence (Psi). Gag-Pol polyprotein may regulate its own translation, by the binding genomic RNA in the 5'-UTR. At low concentration, the polyprotein would promote translation, whereas at high concentration, the polyprotein would encapsidate genomic RNA and then shut off translation. In terms of biological role, targets the polyprotein to the plasma membrane via a multipartite membrane-binding signal, that includes its myristoylated N-terminus. Matrix protein is part of the pre-integration complex. Implicated in the release from host cell mediated by Vpu. Binds to RNA. Its function is as follows. Forms the conical core that encapsulates the genomic RNA-nucleocapsid complex in the virion. Most core are conical, with only 7% tubular. The core is constituted by capsid protein hexamer subunits. The core is disassembled soon after virion entry. Host restriction factors such as TRIM5-alpha or TRIMCyp bind retroviral capsids and cause premature capsid disassembly, leading to blocks in reverse transcription. Capsid restriction by TRIM5 is one of the factors which restricts HIV-1 to the human species. Host PIN1 apparently facilitates the virion uncoating. On the other hand, interactions with PDZD8 or CYPA stabilize the capsid. Functionally, encapsulates and protects viral dimeric unspliced genomic RNA (gRNA). Binds these RNAs through its zinc fingers. Acts as a nucleic acid chaperone which is involved in rearangement of nucleic acid secondary structure during gRNA retrotranscription. Also facilitates template switch leading to recombination. As part of the polyprotein, participates in gRNA dimerization, packaging, tRNA incorporation and virion assembly. Aspartyl protease that mediates proteolytic cleavages of Gag and Gag-Pol polyproteins during or shortly after the release of the virion from the plasma membrane. Cleavages take place as an ordered, step-wise cascade to yield mature proteins. This process is called maturation. Displays maximal activity during the budding process just prior to particle release from the cell. Also cleaves Nef and Vif, probably concomitantly with viral structural proteins on maturation of virus particles. Hydrolyzes host EIF4GI and PABP1 in order to shut off the capped cellular mRNA translation. The resulting inhibition of cellular protein synthesis serves to ensure maximal viral gene expression and to evade host immune response. Also mediates cleavage of host YTHDF3. Mediates cleavage of host CARD8, thereby activating the CARD8 inflammasome, leading to the clearance of latent HIV-1 in patient CD4(+) T-cells after viral reactivation; in contrast, HIV-1 can evade CARD8-sensing when its protease remains inactive in infected cells prior to viral budding. In terms of biological role, multifunctional enzyme that converts the viral RNA genome into dsDNA in the cytoplasm, shortly after virus entry into the cell. This enzyme displays a DNA polymerase activity that can copy either DNA or RNA templates, and a ribonuclease H (RNase H) activity that cleaves the RNA strand of RNA-DNA heteroduplexes in a partially processive 3' to 5' endonucleasic mode. Conversion of viral genomic RNA into dsDNA requires many steps. A tRNA(3)-Lys binds to the primer-binding site (PBS) situated at the 5'-end of the viral RNA. RT uses the 3' end of the tRNA primer to perform a short round of RNA-dependent minus-strand DNA synthesis. The reading proceeds through the U5 region and ends after the repeated (R) region which is present at both ends of viral RNA. The portion of the RNA-DNA heteroduplex is digested by the RNase H, resulting in a ssDNA product attached to the tRNA primer. This ssDNA/tRNA hybridizes with the identical R region situated at the 3' end of viral RNA. This template exchange, known as minus-strand DNA strong stop transfer, can be either intra- or intermolecular. RT uses the 3' end of this newly synthesized short ssDNA to perform the RNA-dependent minus-strand DNA synthesis of the whole template. RNase H digests the RNA template except for two polypurine tracts (PPTs) situated at the 5'-end and near the center of the genome. It is not clear if both polymerase and RNase H activities are simultaneous. RNase H probably can proceed both in a polymerase-dependent (RNA cut into small fragments by the same RT performing DNA synthesis) and a polymerase-independent mode (cleavage of remaining RNA fragments by free RTs). Secondly, RT performs DNA-directed plus-strand DNA synthesis using the PPTs that have not been removed by RNase H as primers. PPTs and tRNA primers are then removed by RNase H. The 3' and 5' ssDNA PBS regions hybridize to form a circular dsDNA intermediate. Strand displacement synthesis by RT to the PBS and PPT ends produces a blunt ended, linear dsDNA copy of the viral genome that includes long terminal repeats (LTRs) at both ends. Its function is as follows. Catalyzes viral DNA integration into the host chromosome, by performing a series of DNA cutting and joining reactions. This enzyme activity takes place after virion entry into a cell and reverse transcription of the RNA genome in dsDNA. The first step in the integration process is 3' processing. This step requires a complex comprising the viral genome, matrix protein, Vpr and integrase. This complex is called the pre-integration complex (PIC). The integrase protein removes 2 nucleotides from each 3' end of the viral DNA, leaving recessed CA OH's at the 3' ends. In the second step, the PIC enters cell nucleus. This process is mediated through integrase and Vpr proteins, and allows the virus to infect a non dividing cell. This ability to enter the nucleus is specific of lentiviruses, other retroviruses cannot and rely on cell division to access cell chromosomes. In the third step, termed strand transfer, the integrase protein joins the previously processed 3' ends to the 5' ends of strands of target cellular DNA at the site of integration. The 5'-ends are produced by integrase-catalyzed staggered cuts, 5 bp apart. A Y-shaped, gapped, recombination intermediate results, with the 5'-ends of the viral DNA strands and the 3' ends of target DNA strands remaining unjoined, flanking a gap of 5 bp. The last step is viral DNA integration into host chromosome. This involves host DNA repair synthesis in which the 5 bp gaps between the unjoined strands are filled in and then ligated. Since this process occurs at both cuts flanking the HIV genome, a 5 bp duplication of host DNA is produced at the ends of HIV-1 integration. Alternatively, Integrase may catalyze the excision of viral DNA just after strand transfer, this is termed disintegration. The protein is Gag-Pol polyprotein (gag-pol) of Human immunodeficiency virus type 1 group M subtype A (isolate MAL) (HIV-1).